The following is a 965-amino-acid chain: Collagen alpha-1(I) chain (965 aa).

A disordered region spans residues 1 to 965; that stretch reads GGISVPGPMG…PGPPGPPGPP (965 aa). Residues P18, P21, P23, P32, P35, P38, P53, P68, P74, P83, and P89 each carry the 4-hydroxyproline modification. Over residues 26–44 the composition is skewed to low complexity; sequence QGFQGPPGEPGEPGSSGPM. Positions 56-70 are enriched in basic and acidic residues; sequence NGDDGEAGKPGRPGE. K92 carries the 5-hydroxylysine; alternate modification. K92 carries an O-linked (Gal...) hydroxylysine; alternate glycan. Position 98 is a phosphoserine (S98). Positions 106–122 are enriched in low complexity; sequence DAGPAGPKGEPGSPGEN. 4-hydroxyproline occurs at positions 116, 119, 125, 139, 160, 169, 172, 199, 202, 214, 220, 229, 235, 238, and 253. Positions 139-157 are enriched in low complexity; the sequence is PGASGPAGARGNDGATGAA. Residues 159–171 show a composition bias toward pro residues; it reads PPGPTGPAGPPGF. Residues 205–244 are compositionally biased toward low complexity; sequence AGAAGPAGNPGADGQPGAKGANGAPGIAGAPGFPGARGPS. K256 is modified (5-hydroxylysine). P262, P265, P269, P278, P293, P299, P308, and P314 each carry 4-hydroxyproline. Residues 303-312 are compositionally biased toward gly residues; the sequence is GERGGPGSRG. A 5-hydroxylysine modification is found at K323. 4-hydroxyproline is present on residues P326, P332, P338, P347, P350, P359, P368, P374, P386, P395, P404, P407, P425, P442, P448, P454, P460, P466, P472, P484, P493, P506, P512, and P521. Residues 341–367 are compositionally biased toward low complexity; sequence KGLTGSPGSPGPDGKTGPPGPAGQDGR. Positions 376 to 395 are enriched in low complexity; sequence ARGQAGVMGFPGPKGAAGEP. Residues 454-463 show a composition bias toward low complexity; that stretch reads PGEAGKPGEQ. K533 carries the 5-hydroxylysine modification. P539, P554, and P560 each carry 4-hydroxyproline. The span at 566 to 580 shows a compositional bias: low complexity; that stretch reads SGPSGPAGPTGARGA. Position 569 is a phosphoserine (S569). A 4-hydroxyproline mark is found at P581, P587, P590, P599, P605, P623, P632, and P641. Positions 593 to 620 are enriched in low complexity; that stretch reads AGFAGPPGADGQPGAKGEPGDAGAKGDA. At K644 the chain carries 5-hydroxylysine. Residues 649 to 665 show a composition bias toward low complexity; that stretch reads SAGPPGATGFPGAAGRV. 4-hydroxyproline is present on residues P653 and P659. Residue P667 is modified to 3-hydroxyproline. 14 positions are modified to 4-hydroxyproline: P668, P677, P680, P716, P725, P743, P752, P755, P761, P776, P782, P788, P796, and P802. The segment covering 710–725 has biased composition (low complexity); the sequence is SGEKGSPGADGPAGAP. A compositionally biased stretch (pro residues) spans 775-785; that stretch reads PPGPMGPPGLA. K811 is subject to 5-hydroxylysine. 4-hydroxyproline is present on residues P819, P822, and P825. Residues 819 to 831 show a composition bias toward pro residues; sequence PGAPGAPGAPGPV. The span at 851 to 865 shows a compositional bias: low complexity; sequence AGPAGARGPAGPQGP. Over residues 866–880 the composition is skewed to basic and acidic residues; sequence RGDKGETGEQGDRGI. Residue K869 is modified to 5-hydroxylysine. A 5-hydroxylysine; alternate modification is found at K881. O-linked (Gal...) hydroxylysine; alternate glycosylation is present at K881. Residues P896, P899, P917, and P932 each carry the 4-hydroxyproline modification. Low complexity predominate over residues 899-932; it reads PGEQGPSGASGPAGPRGPPGSAGSPGKDGLNGLP. P937 is modified (3-hydroxyproline). P938 carries the post-translational modification 4-hydroxyproline. Over residues 950–965 the composition is skewed to pro residues; it reads VGPPGPPGPPGPPGPP. P952 is modified (3-hydroxyproline). The residue at position 953 (P953) is a 4-hydroxyproline. P955 is subject to 3-hydroxyproline. P956 carries the post-translational modification 4-hydroxyproline. At P958 the chain carries 3-hydroxyproline. P959, P962, and P965 each carry 4-hydroxyproline.

Belongs to the fibrillar collagen family. Trimers of one alpha 2(I) and two alpha 1(I) chains. In terms of processing, contains mostly 4-hydroxyproline. Proline residues at the third position of the tripeptide repeating unit (G-X-Y) are hydroxylated in some or all of the chains. Contains 3-hydroxyproline at a few sites. This modification occurs on the first proline residue in the sequence motif Gly-Pro-Hyp, where Hyp is 4-hydroxyproline. Post-translationally, lysine residues at the third position of the tripeptide repeating unit (G-X-Y) are 5-hydroxylated in some or all of the chains. In terms of processing, O-glycosylated on hydroxylated lysine residues. The O-linked glycan consists of a Glc-Gal disaccharide. As to expression, expressed in bones.

Its subcellular location is the secreted. It is found in the extracellular space. The protein localises to the extracellular matrix. Functionally, type I collagen is a member of group I collagen (fibrillar forming collagen). This chain is Collagen alpha-1(I) chain, found in Acratocnus sp. (strain SLP-2019) (Ground sloth).